We begin with the raw amino-acid sequence, 140 residues long: Small ribosomal subunit protein uS19 (140 aa).

Belongs to the universal ribosomal protein uS19 family.

In terms of biological role, protein S19 forms a complex with S13 that binds strongly to the 16S ribosomal RNA. This chain is Small ribosomal subunit protein uS19, found in Sulfolobus acidocaldarius (strain ATCC 33909 / DSM 639 / JCM 8929 / NBRC 15157 / NCIMB 11770).